The primary structure comprises 642 residues: Bifunctional protein glk (642 aa).

The tract at residues 1–340 is glucokinase; the sequence is MSTGAQSKAA…QLSNRSGGAS (340 aa). 23-28 contacts ATP; it reads ADVGGT. One can recognise an HTH rpiR-type domain in the interval 341 to 417; that stretch reads SAVFERIRQM…LKLATGLTGT (77 aa). Residues 341 to 642 are putative HTH-type transcriptional regulator; the sequence is SAVFERIRQM…SPAAKDVARD (302 aa). Residues 377-396 constitute a DNA-binding region (H-T-H motif); sequence IVDIARKADVSQPTVIRFCR. Residues 461–600 enclose the SIS domain; it reads AIEILNGARR…AVGVAIRRAS (140 aa). The helical transmembrane segment at 576-596 threads the bilayer; the sequence is SMISRILHLLMIDILAVGVAI.

It in the N-terminal section; belongs to the bacterial glucokinase family.

The protein resides in the membrane. The catalysed reaction is D-glucose + ATP = D-glucose 6-phosphate + ADP + H(+). The chain is Bifunctional protein glk (glk) from Burkholderia lata (strain ATCC 17760 / DSM 23089 / LMG 22485 / NCIMB 9086 / R18194 / 383).